The chain runs to 649 residues: Alpha-amylase (649 aa).

Catalysis depends on Glu124, which acts as the Nucleophile. The active-site Proton donor is the Asp215.

This sequence belongs to the glycosyl hydrolase 57 family. In terms of assembly, homodimer.

The catalysed reaction is Endohydrolysis of (1-&gt;4)-alpha-D-glucosidic linkages in polysaccharides containing three or more (1-&gt;4)-alpha-linked D-glucose units.. Displays a broad range of substrate specificity, with the capacity to hydrolyze carbohydrates as simple as maltotriose. This Pyrococcus furiosus (strain ATCC 43587 / DSM 3638 / JCM 8422 / Vc1) protein is Alpha-amylase (amyA).